We begin with the raw amino-acid sequence, 836 residues long: ATP-binding cassette sub-family B member 6 (836 aa).

Over 1 to 26 (MVTVGNYCEAEGPAGPAWTQNGLSPC) the chain is Lumenal. The tract at residues 1-205 (MVTVGNYCEA…SGGLFILGLW (205 aa)) is required for the lysosomal targeting. The tract at residues 1–236 (MVTVGNYCEA…RNQGRSTDPR (236 aa)) is required for ATPase activity. An intrachain disulfide couples Cys8 to Cys26. A helical transmembrane segment spans residues 27-47 (FFYTLVPSTLMTLGVLALVLV). The Cytoplasmic portion of the chain corresponds to 48–72 (LPCRRREVPAGTEELSWAAGPRVAP). Residues 73–93 (YALQLSLAILQMALPLASLAG) form a helical membrane-spanning segment. At 94-106 (RVGTARGVRLPGY) the chain is on the lumenal side. Residues 107-127 (LLLASVLESLASACGLWLLVV) traverse the membrane as a helical segment. Topologically, residues 128-147 (ERSQARQSLAMGVWMKFRHS) are cytoplasmic. A helical membrane pass occupies residues 148 to 168 (LGLLLLWTVTFAAENLVLVSW). The Lumenal segment spans residues 169–185 (NSPQWWWSRADLGQQVQ). A helical membrane pass occupies residues 186–206 (FGLWVLRYMTSGGLFILGLWA). At 207–264 (PGLRPQSYTLHVNEEDQDGGRNQGRSTDPRSTWRDLGRKLRLLSGYLWPRGSPSLQLT) the chain is on the cytoplasmic side. A helical transmembrane segment spans residues 265 to 285 (VLLCMGLMGLDRALNVLVPIF). An ABC transmembrane type-1 domain is found at 265–556 (VLLCMGLMGL…FGTYYRMIQT (292 aa)). Residues 286–305 (YRDIVNLLTSKAPWSSLAWT) lie on the Lumenal side of the membrane. The helical transmembrane segment at 306 to 326 (VTTYVFLKFLQGGGTGSTGFV) threads the bilayer. Over 327–375 (SNLRTFLWIRVQQFTSRGVELRLFSHLHELSLRWHLGRRTGEVLRIVDR) the chain is Cytoplasmic. Residues 376–396 (GTSSVTGLLSYLVFNIIPTLA) form a helical membrane-spanning segment. Position 397 (Asp397) is a topological domain, lumenal. A helical membrane pass occupies residues 398 to 418 (IIIGIIYFSMFFNAWFGLIVF). Residues 419 to 499 (LCMSLYLILT…STASLVLLNQ (81 aa)) lie on the Cytoplasmic side of the membrane. The chain crosses the membrane as a helical span at residues 500–520 (TQNMVIGFGLLAGSLLCAYFV). At 521–529 (SERRLQVGD) the chain is on the lumenal side. A helical transmembrane segment spans residues 530-550 (FVLFGTYITQLYMPLNWFGTY). The Cytoplasmic portion of the chain corresponds to 551 to 836 (YRMIQTNFID…QGQETVPEDS (286 aa)). One can recognise an ABC transporter domain in the interval 590-824 (VEFENVHFSY…GGVYAEMWQL (235 aa)). Residues Tyr599 and 623–634 (GPSGAGKSTILR) each bind ATP.

The protein belongs to the ABC transporter superfamily. ABCB family. Heavy Metal importer (TC 3.A.1.210) subfamily. In terms of assembly, homodimer. Post-translationally, N-glycosylated. Ubiquitously expressed. Highly expressed in testis by meiotic pachytene spermatocytes and post-meiotic early spermatids.

It localises to the cell membrane. The protein resides in the mitochondrion outer membrane. It is found in the endoplasmic reticulum membrane. The protein localises to the golgi apparatus membrane. Its subcellular location is the endosome membrane. It localises to the lysosome membrane. The protein resides in the late endosome membrane. It is found in the early endosome membrane. The protein localises to the secreted. Its subcellular location is the extracellular exosome. It localises to the mitochondrion. The protein resides in the endosome. It is found in the multivesicular body membrane. The protein localises to the melanosome membrane. It catalyses the reaction heme b(in) + ATP + H2O = heme b(out) + ADP + phosphate + H(+). It carries out the reaction coproporphyrin III(in) + ATP + H2O = coproporphyrin III(out) + ADP + phosphate + H(+). The catalysed reaction is pheophorbide a(in) + ATP + H2O = pheophorbide a(out) + ADP + phosphate + H(+). The enzyme catalyses coproporphyrinogen III(in) + ATP + H2O = coproporphyrinogen III(out) + ADP + phosphate + H(+). It catalyses the reaction protoporphyrin IX(in) + ATP + H2O = protoporphyrin IX(out) + ADP + phosphate + H(+). It carries out the reaction coproporphyrin I(in) + ATP + H2O = coproporphyrin I(out) + ADP + phosphate + H(+). The catalysed reaction is uroporphyrin I(in) + ATP + H2O = uroporphyrin I(out) + ADP + phosphate + H(+). The enzyme catalyses uroporphyrin III(in) + ATP + H2O = uroporphyrin III(out) + ADP + phosphate + H(+). ATP-dependent transporter that catalyzes the transport of a broad-spectrum of porphyrins from the cytoplasm to the extracellular space through the plasma membrane or into the vesicle lumen. May also function as an ATP-dependent importer of porphyrins from the cytoplasm into the mitochondria, in turn may participate in the de novo heme biosynthesis regulation and in the coordination of heme and iron homeostasis during phenylhydrazine stress. May play a key role in the early steps of melanogenesis producing PMEL amyloid fibrils. In vitro, it confers to cells a resistance to toxic metal such as arsenic and cadmium and against chemotherapeutics agent such as 5-fluorouracil, SN-38 and vincristin. In addition may play a role in the transition metal homeostasis. This chain is ATP-binding cassette sub-family B member 6, found in Rattus norvegicus (Rat).